The chain runs to 142 residues: Peptide methionine sulfoxide reductase MsrB (142 aa).

Positions K3 to F126 constitute a MsrB domain. Catalysis depends on C115, which acts as the Nucleophile.

Belongs to the MsrB Met sulfoxide reductase family.

It catalyses the reaction L-methionyl-[protein] + [thioredoxin]-disulfide + H2O = L-methionyl-(R)-S-oxide-[protein] + [thioredoxin]-dithiol. In Lactococcus lactis subsp. cremoris (strain SK11), this protein is Peptide methionine sulfoxide reductase MsrB.